A 600-amino-acid polypeptide reads, in one-letter code: DNA mismatch repair protein MutL (600 aa).

Residues 348 to 375 (QPQAQRPQTAWSAETSPFRPYQPTTGFS) are disordered. A compositionally biased stretch (polar residues) spans 349–362 (PQAQRPQTAWSAET).

Belongs to the DNA mismatch repair MutL/HexB family.

Functionally, this protein is involved in the repair of mismatches in DNA. It is required for dam-dependent methyl-directed DNA mismatch repair. May act as a 'molecular matchmaker', a protein that promotes the formation of a stable complex between two or more DNA-binding proteins in an ATP-dependent manner without itself being part of a final effector complex. In Rhizobium leguminosarum bv. trifolii (strain WSM2304), this protein is DNA mismatch repair protein MutL.